A 445-amino-acid chain; its full sequence is Tubulin beta chain (445 aa).

Residues Gln-11, Glu-69, Ser-138, Gly-142, Thr-143, Gly-144, Asn-204, and Asn-226 each contribute to the GTP site. Residue Glu-69 coordinates Mg(2+).

It belongs to the tubulin family. As to quaternary structure, dimer of alpha and beta chains. A typical microtubule is a hollow water-filled tube with an outer diameter of 25 nm and an inner diameter of 15 nM. Alpha-beta heterodimers associate head-to-tail to form protofilaments running lengthwise along the microtubule wall with the beta-tubulin subunit facing the microtubule plus end conferring a structural polarity. Microtubules usually have 13 protofilaments but different protofilament numbers can be found in some organisms and specialized cells. It depends on Mg(2+) as a cofactor.

It localises to the cytoplasm. It is found in the cytoskeleton. Tubulin is the major constituent of microtubules, a cylinder consisting of laterally associated linear protofilaments composed of alpha- and beta-tubulin heterodimers. Microtubules grow by the addition of GTP-tubulin dimers to the microtubule end, where a stabilizing cap forms. Below the cap, tubulin dimers are in GDP-bound state, owing to GTPase activity of alpha-tubulin. The sequence is that of Tubulin beta chain from Leishmania mexicana.